A 755-amino-acid chain; its full sequence is Leucine-rich repeat-containing protein 36 (755 aa).

LRR repeat units follow at residues 51-72 (SLRSLDLSRNLITSLKGIQYLC) and 73-94 (SLQELNLYYNNIPSLVEVSRLQ). An LRRCT domain is found at 107–146 (NPVVRKDTDYRLFAVYTLQTLEKLDDRAVRDSERRAAKLH). Disordered stretches follow at residues 354–374 (GKNYREHSIKPSQDKKATTSH) and 448–517 (LPPG…PPIS). Positions 356 to 370 (NYREHSIKPSQDKKA) are enriched in basic and acidic residues. Low complexity predominate over residues 498–510 (LSSDLGSLHGLSG). Residues 601 to 671 (VESLKQKLVK…ELTQLKRLEE (71 aa)) adopt a coiled-coil conformation. The disordered stretch occupies residues 701–755 (YSGKSLLPPEKSHPLGRSSPFGKSTLSSSSPMVHDTGQYLIQSVSEADPEPSLWS). The span at 721-731 (FGKSTLSSSSP) shows a compositional bias: polar residues.

This chain is Leucine-rich repeat-containing protein 36 (Lrrc36), found in Mus musculus (Mouse).